A 337-amino-acid polypeptide reads, in one-letter code: tRNA N6-adenosine threonylcarbamoyltransferase (337 aa).

Fe cation contacts are provided by H111 and H115. Substrate is bound by residues 134-138 (LVSGG), D167, G180, and N272. Residue D300 coordinates Fe cation.

Belongs to the KAE1 / TsaD family. It depends on Fe(2+) as a cofactor.

The protein localises to the cytoplasm. The enzyme catalyses L-threonylcarbamoyladenylate + adenosine(37) in tRNA = N(6)-L-threonylcarbamoyladenosine(37) in tRNA + AMP + H(+). In terms of biological role, required for the formation of a threonylcarbamoyl group on adenosine at position 37 (t(6)A37) in tRNAs that read codons beginning with adenine. Is involved in the transfer of the threonylcarbamoyl moiety of threonylcarbamoyl-AMP (TC-AMP) to the N6 group of A37, together with TsaE and TsaB. TsaD likely plays a direct catalytic role in this reaction. The protein is tRNA N6-adenosine threonylcarbamoyltransferase of Nitrosomonas europaea (strain ATCC 19718 / CIP 103999 / KCTC 2705 / NBRC 14298).